Here is a 317-residue protein sequence, read N- to C-terminus: Protein translocase subunit SecF (317 aa).

Helical transmembrane passes span 11–31 (FYLLSLLIIIPGTIYLLLFGL), 135–155 (RSIVAIALASLGILGYIAFAF), 166–186 (ICAIIAMLHDVLVVVGIFAIL), 197–217 (LFVTALLTVIGFSVHDTIVVF), 244–266 (LVRSVNTSMTVIFTLLALYFFGG), and 276–298 (LLIGIVSGTYSSIFNASLLLVSW).

Belongs to the SecD/SecF family. SecF subfamily. Forms a complex with SecD. Part of the essential Sec protein translocation apparatus which comprises SecA, SecYEG and auxiliary proteins SecDF. Other proteins may also be involved.

It localises to the cell membrane. In terms of biological role, part of the Sec protein translocase complex. Interacts with the SecYEG preprotein conducting channel. SecDF uses the proton motive force (PMF) to complete protein translocation after the ATP-dependent function of SecA. This chain is Protein translocase subunit SecF, found in Thermobaculum terrenum (strain ATCC BAA-798 / CCMEE 7001 / YNP1).